Here is a 558-residue protein sequence, read N- to C-terminus: SPATS2-like protein (558 aa).

A2 is modified (N-acetylalanine). The segment covering 63–79 (GKKKNNKRKRSKSKQHQ) has biased composition (basic residues). Positions 63-204 (GKKKNNKRKR…SPVKSNAPAA (142 aa)) are disordered. Basic and acidic residues-rich tracts occupy residues 80 to 92 (GNKDAKDKVERPE) and 110 to 142 (GCEKDSSSPDSTREKLALTPREKKISILEEPPR). A Phosphoserine modification is found at S120. Positions 279 to 344 (KEEAMDILTA…ARFSCDIEQL (66 aa)) form a coiled coil. Disordered regions lie at residues 385–406 (GNFARKSSGHNKPSEGKAANPK) and 421–514 (TMPT…RQHA). Over residues 421–433 (TMPTNKQQNGPSS) the composition is skewed to polar residues. Positions 469-485 (HEHRRQPHNGFRPKNKG) are enriched in basic residues.

This sequence belongs to the SPATS2 family.

The protein localises to the cytoplasm. It is found in the nucleus. The protein resides in the nucleolus. In Mus musculus (Mouse), this protein is SPATS2-like protein (Spats2l).